A 396-amino-acid chain; its full sequence is 4-hydroxy-3-methylbut-2-en-1-yl diphosphate synthase (ferredoxin) (396 aa).

Residues Cys-305, Cys-308, Cys-339, and Glu-346 each contribute to the [4Fe-4S] cluster site.

This sequence belongs to the IspG family. It depends on [4Fe-4S] cluster as a cofactor.

It carries out the reaction (2E)-4-hydroxy-3-methylbut-2-enyl diphosphate + 2 oxidized [2Fe-2S]-[ferredoxin] + H2O = 2-C-methyl-D-erythritol 2,4-cyclic diphosphate + 2 reduced [2Fe-2S]-[ferredoxin] + H(+). Its pathway is isoprenoid biosynthesis; isopentenyl diphosphate biosynthesis via DXP pathway; isopentenyl diphosphate from 1-deoxy-D-xylulose 5-phosphate: step 5/6. In terms of biological role, converts 2C-methyl-D-erythritol 2,4-cyclodiphosphate (ME-2,4cPP) into 1-hydroxy-2-methyl-2-(E)-butenyl 4-diphosphate. The chain is 4-hydroxy-3-methylbut-2-en-1-yl diphosphate synthase (ferredoxin) from Gloeobacter violaceus (strain ATCC 29082 / PCC 7421).